Consider the following 123-residue polypeptide: Periplasmic [Fe] hydrogenase small subunit (123 aa).

The tat-type signal signal peptide spans 1 to 34; sequence MQIASITRRGFLKVACVTTGAALIGIRMTGKAVA. The segment at 103 to 123 is disordered; it reads TTAGKLPNPRASEFEGPYPYE.

As to quaternary structure, heterodimer of a large and a small subunit. In terms of processing, predicted to be exported by the Tat system. The position of the signal peptide cleavage has been experimentally proven.

It is found in the periplasm. It carries out the reaction H2 + 2 oxidized [2Fe-2S]-[ferredoxin] = 2 reduced [2Fe-2S]-[ferredoxin] + 2 H(+). Functionally, may be involved in hydrogen uptake for the reduction of sulfate to hydrogen sulfide in an electron transport chain. Cytochrome c3 is likely to be the physiological electron carrier for the enzyme. This chain is Periplasmic [Fe] hydrogenase small subunit (hydB), found in Nitratidesulfovibrio vulgaris (strain ATCC 29579 / DSM 644 / CCUG 34227 / NCIMB 8303 / VKM B-1760 / Hildenborough) (Desulfovibrio vulgaris).